Reading from the N-terminus, the 479-residue chain is U3 snoRNP-associated protein-like EMB2271 (479 aa).

A disordered region spans residues 1–73 (MKLEKKKGIG…AHETVGEKRK (73 aa)). Positions 8–17 (GIGAKRRGKK) are enriched in basic residues. Residues 18 to 38 (SSIDHDPFLEEETEKRRKFNY) show a composition bias toward basic and acidic residues. Residues 39-51 (DDDDDIESVESEE) are compositionally biased toward acidic residues. The segment covering 52 to 73 (EGKVGEEVEDEFAHETVGEKRK) has biased composition (basic and acidic residues). WD repeat units follow at residues 143-182 (KHQH…SDEY), 204-243 (RHNK…HVQA), 246-285 (GHCG…YIES), 288-326 (GHQS…RLIY), 328-366 (ASES…PVFI), 386-425 (PACS…SAIQ), and 431-471 (PLPG…QNGV).

It belongs to the WD repeat RRP9 family.

The protein localises to the nucleus. It localises to the nucleolus. Component of a nucleolar small nuclear ribonucleoprotein particle (snoRNP) thought to participate in the processing and modification of pre-ribosomal RNA. Essential for embryogenesis. May function during late embryogenesis. The chain is U3 snoRNP-associated protein-like EMB2271 from Arabidopsis thaliana (Mouse-ear cress).